A 245-amino-acid polypeptide reads, in one-letter code: uncharacterized protein (245 aa).

This is an uncharacterized protein from Frog virus 3 (isolate Goorha) (FV-3).